Here is a 76-residue protein sequence, read N- to C-terminus: Mating-type pheromone BBP1(1) (76 aa).

C73 is subject to Cysteine methyl ester. The S-farnesyl cysteine moiety is linked to residue C73. Positions V74–A76 are cleaved as a propeptide — removed in mature form.

Its subcellular location is the cell membrane. Functionally, activates B-regulated development. This Schizophyllum commune (Split gill fungus) protein is Mating-type pheromone BBP1(1) (BBP1(1)).